We begin with the raw amino-acid sequence, 1581 residues long: Mediator of RNA polymerase II transcription subunit 1 (1581 aa).

The tract at residues 1-670 (MKAQGETEES…YGSSPLERQN (670 aa)) is interaction with the Mediator complex and THRA. The interval 16 to 590 (MSSLLERLHA…SIKDRHESVG (575 aa)) is interaction with ESR1. Interaction with the Mediator complex stretches follow at residues 108 to 212 (FYVE…GYLT) and 215 to 390 (SGGH…SLQG). The interval 405–644 (PLILNLIRHQ…MAGNTKNHPM (240 aa)) is interaction with THRA. Residues 542–789 (PASSPGYGMT…TDILSDIAEE (248 aa)) are interaction with VDR. Phosphoserine is present on serine 588. The short motif at 604–608 (LTSLL) is the LXXLL motif 1 element. 4 disordered regions span residues 609–705 (QITG…HQTE), 792–820 (KLPS…QSTL), 874–893 (SQSG…GDND), and 948–1566 (EHHS…DFMI). Pro residues predominate over residues 622-632 (PTPPHHTPPPV). Positions 622–701 (PTPPHHTPPP…SSRLPPEKPK (80 aa)) are interaction with PPARGC1A and THRA. The short motif at 645–649 (LMNLL) is the LXXLL motif 2 element. Positions 655 to 675 (QDFSTLYGSSPLERQNSSSGS) are enriched in polar residues. The interval 656 to 1066 (DFSTLYGSSP…TPPIPKITIQ (411 aa)) is interaction with ESR1. Residue serine 664 is modified to Phosphoserine. The tract at residues 681–715 (CSGSNKTKKKKSSRLPPEKPKHQTEDDFQRELFSM) is interaction with GATA1. Positions 696 to 705 (PPEKPKHQTE) are enriched in basic and acidic residues. Residue serine 795 is modified to Phosphoserine. Residue threonine 805 is modified to Phosphothreonine. The segment covering 808-820 (RDSSSSGHSQSTL) has biased composition (polar residues). An Integrase domain-binding motif (IBM) motif is present at residues 875-902 (QSGFGEEYFDESSQSGDNDDFKGFASQA). Phosphoserine occurs at positions 887 and 953. Positions 963–974 (LGKEKTQKRVKE) are enriched in basic and acidic residues. Threonine 1032 bears the Phosphothreonine; by MAPK1 or MAPK3 mark. Over residues 1034 to 1045 (PTSTGGSKSPGS) the composition is skewed to low complexity. Phosphothreonine is present on residues threonine 1051 and threonine 1057. 2 stretches are compositionally biased toward low complexity: residues 1078–1094 (SSHS…SSGS) and 1101–1156 (SSSS…PGSS). Serine 1156 carries the phosphoserine modification. Residues 1162 to 1195 (GLSSGSSSTKMKPQGKPSSLMNPSLSKPNISPSH) are compositionally biased toward polar residues. An N6-acetyllysine modification is found at lysine 1177. The residue at position 1207 (serine 1207) is a Phosphoserine. Threonine 1215 is modified (phosphothreonine). Composition is skewed to low complexity over residues 1218-1227 (SSKAKSPISS) and 1234-1293 (MSGT…SKGK). Serine 1223 is subject to Phosphoserine. An interaction with TP53 region spans residues 1249–1421 (LGSSGSLSQK…KPGESSGEGL (173 aa)). A Phosphoserine modification is found at serine 1302. Positions 1330–1345 (GVSTNSSSHPMSSKHN) are enriched in polar residues. Serine 1347 carries the post-translational modification Phosphoserine. Over residues 1352-1364 (QGKREKSDKDKSK) the composition is skewed to basic and acidic residues. Phosphoserine occurs at positions 1403 and 1433. 2 stretches are compositionally biased toward polar residues: residues 1425-1440 (MASS…SGST) and 1448-1482 (PSHS…SPSS). Position 1440 is a phosphothreonine (threonine 1440). Residue threonine 1457 is modified to Phosphothreonine; by MAPK1 or MAPK3. Residues serine 1463, serine 1465, serine 1479, serine 1481, and serine 1482 each carry the phosphoserine modification. Residues 1496–1505 (KHKKHKKEKK) are compositionally biased toward basic residues. Basic and acidic residues predominate over residues 1506–1522 (KVKDKDRDRDRDKDRDK). Lysine 1529 is modified (N6-acetyllysine). The span at 1533–1552 (WSKSPISSDQSLSMTSNTIL) shows a compositional bias: polar residues.

This sequence belongs to the Mediator complex subunit 1 family. In terms of assembly, component of the Mediator complex, which is composed of MED1, MED4, MED6, MED7, MED8, MED9, MED10, MED11, MED12, MED13, MED13L, MED14, MED15, MED16, MED17, MED18, MED19, MED20, MED21, MED22, MED23, MED24, MED25, MED26, MED27, MED29, MED30, MED31, CCNC, CDK8 and CDC2L6/CDK11. The MED12, MED13, CCNC and CDK8 subunits form a distinct module termed the CDK8 module. Mediator containing the CDK8 module is less active than Mediator lacking this module in supporting transcriptional activation. Individual preparations of the Mediator complex lacking one or more distinct subunits have been variously termed ARC, CRSP, DRIP, PC2, SMCC and TRAP. This subunit specifically interacts with a number of nuclear receptors in a ligand-dependent fashion including AR, ESR1, ESR2, PPARA, PPARG, RORA, RXRA, RXRG, THRA, THRB and VDR. Interacts with CTNNB1, GABPA, GLI3, PPARGC1A and TP53. Interacts with YWHAH. Interacts with CLOCK; this interaction requires the presence of THRAP3. Interacts with GATA1 and CCAR1. Interacts with NR4A3. Interacts (via IBM motif) with PSIP1 (via IBD domain); phosphorylation increases its affinity for PSIP1. Interacts with USP22. Post-translationally, phosphorylated by MAPK1 or MAPK3 during G2/M phase which may enhance protein stability and promote entry into the nucleolus. Phosphorylation increases its interaction with PSIP1. Ubiquitously expressed.

The protein localises to the nucleus. Functionally, component of the Mediator complex, a coactivator involved in the regulated transcription of nearly all RNA polymerase II-dependent genes. Mediator functions as a bridge to convey information from gene-specific regulatory proteins to the basal RNA polymerase II transcription machinery. Mediator is recruited to promoters by direct interactions with regulatory proteins and serves as a scaffold for the assembly of a functional preinitiation complex with RNA polymerase II and the general transcription factors. Acts as a coactivator for GATA1-mediated transcriptional activation during erythroid differentiation of K562 erythroleukemia cells. This chain is Mediator of RNA polymerase II transcription subunit 1 (MED1), found in Homo sapiens (Human).